A 132-amino-acid polypeptide reads, in one-letter code: Flagellar assembly factor FliW (132 aa).

Belongs to the FliW family. As to quaternary structure, interacts with translational regulator CsrA and flagellin(s).

The protein resides in the cytoplasm. Its function is as follows. Acts as an anti-CsrA protein, binds CsrA and prevents it from repressing translation of its target genes, one of which is flagellin. Binds to flagellin and participates in the assembly of the flagellum. This is Flagellar assembly factor FliW from Borreliella afzelii (strain PKo) (Borrelia afzelii).